Here is a 234-residue protein sequence, read N- to C-terminus: Uridylate kinase (234 aa).

Residue 9 to 12 (KLSG) coordinates ATP. Residue G51 participates in UMP binding. ATP contacts are provided by G52 and R56. UMP is bound by residues D71 and 132–139 (CGNPFFTT). Residues T159, Y165, and D168 each coordinate ATP.

This sequence belongs to the UMP kinase family. In terms of assembly, homohexamer.

The protein resides in the cytoplasm. It catalyses the reaction UMP + ATP = UDP + ADP. Its pathway is pyrimidine metabolism; CTP biosynthesis via de novo pathway; UDP from UMP (UMPK route): step 1/1. Its activity is regulated as follows. Inhibited by UTP. Functionally, catalyzes the reversible phosphorylation of UMP to UDP. The protein is Uridylate kinase of Prochlorococcus marinus (strain MIT 9215).